Reading from the N-terminus, the 274-residue chain is uncharacterized protein (274 aa).

The signal sequence occupies residues 1–19 (MKRINKVLLSLLCLVIAYA).

This is an uncharacterized protein from Rickettsia prowazekii (strain Madrid E).